A 287-amino-acid polypeptide reads, in one-letter code: S-methyl-5'-thioadenosine phosphorylase (287 aa).

Residues Thr13 and 55–56 contribute to the phosphate site; that span reads RH. Position 186 (Met186) interacts with substrate. Position 187 (Thr187) interacts with phosphate. Substrate is bound at residue 210-212; that stretch reads DYD.

Belongs to the PNP/MTAP phosphorylase family. MTAP subfamily. As to quaternary structure, homohexamer. Dimer of a homotrimer.

The enzyme catalyses S-methyl-5'-thioadenosine + phosphate = 5-(methylsulfanyl)-alpha-D-ribose 1-phosphate + adenine. Its pathway is amino-acid biosynthesis; L-methionine biosynthesis via salvage pathway; S-methyl-5-thio-alpha-D-ribose 1-phosphate from S-methyl-5'-thioadenosine (phosphorylase route): step 1/1. Functionally, catalyzes the reversible phosphorylation of S-methyl-5'-thioadenosine (MTA) to adenine and 5-methylthioribose-1-phosphate. Involved in the breakdown of MTA, a major by-product of polyamine biosynthesis. Responsible for the first step in the methionine salvage pathway after MTA has been generated from S-adenosylmethionine. Has broad substrate specificity with 6-aminopurine nucleosides as preferred substrates. This chain is S-methyl-5'-thioadenosine phosphorylase, found in Leptospira interrogans serogroup Icterohaemorrhagiae serovar copenhageni (strain Fiocruz L1-130).